Reading from the N-terminus, the 258-residue chain is Polysialic acid transport protein KpsM (258 aa).

The ABC transmembrane type-2 domain occupies 30–251; it reads LGYLWAILEP…FIGLALYRTR (222 aa). 6 helical membrane passes run 33-53, 61-81, 110-130, 144-164, 175-195, and 227-247; these read LWAI…FGYI, ISFP…SSIS, ALLE…IVWM, VLTW…FMVV, LPIL…LHSI, and GVSL…GLAL.

It belongs to the ABC-2 integral membrane protein family.

Its subcellular location is the cell inner membrane. Functionally, kpsM and KpsT constitute a system for the transport of polysialic acid across the cytoplasmic membrane. This Escherichia coli protein is Polysialic acid transport protein KpsM (kpsM).